The following is a 732-amino-acid chain: Kell blood group glycoprotein (732 aa).

The interval 1–37 (MEGGDQSEEEPRERSQAGGMGTLWSQESTPEERLPVE) is disordered. Residues 1–47 (MEGGDQSEEEPRERSQAGGMGTLWSQESTPEERLPVEGSRPWAVARR) are Cytoplasmic-facing. Ser7 carries the post-translational modification Phosphoserine. The helical; Signal-anchor for type II membrane protein transmembrane segment at 48 to 67 (VLTAILILGLLLCFSVLLFY) threads the bilayer. Topologically, residues 68 to 732 (NFQNCGPRPC…LNPSSRCQLW (665 aa)) are extracellular. The Peptidase M13 domain occupies 76–732 (PCETSVCLDL…LNPSSRCQLW (657 aa)). A disulfide bridge connects residues Cys77 and Cys82. Asn94 and Asn115 each carry an N-linked (GlcNAc...) asparagine glycan. Disulfide bonds link Cys100-Cys717, Cys108-Cys682, Cys155-Cys410, and Cys610-Cys729. The N-linked (GlcNAc...) asparagine; in KEL2 antigen glycan is linked to Asn191. N-linked (GlcNAc...) asparagine glycosylation is present at Asn345. His581 is a Zn(2+) binding site. The active site involves Glu582. Residue His585 participates in Zn(2+) binding. A glycan (N-linked (GlcNAc...) asparagine) is linked at Asn627. Glu634 is a Zn(2+) binding site. Asp638 serves as the catalytic Proton donor. A disordered region spans residues 684 to 703 (KPSPQDSHDTHSPPHLRVHG).

It belongs to the peptidase M13 family. In terms of assembly, heterodimer with XK; disulfide-linked. It depends on Zn(2+) as a cofactor. N-glycosylated. In terms of tissue distribution, expressed at high levels in erythrocytes and testis (in Sertoli cells), and, at lower levels, in skeletal muscle, tonsils (in follicular dendritic cells), lymph node, spleen and appendix (at protein level). Also expressed in many adult and fetal nonerythroid tissues, including brain, spleen, lymph nodes and bone marrow.

The protein localises to the cell membrane. Zinc endopeptidase with endothelin-3-converting enzyme activity. Cleaves EDN1, EDN2 and EDN3, with a marked preference for EDN3. In Homo sapiens (Human), this protein is Kell blood group glycoprotein (KEL).